The sequence spans 584 residues: MEIVFSSSLSSTLTVTKILRSPRHATTGNMQDYSRFPLFFTIASRSNASQAKHRRSANYHPTIWDPKAIECLRTPYTYDGVHGARLQKLKDEVRSLLTTFTKEPCGQLKLIDSMQRLGVSYHFREEIEEILNLVELDSDSDLYTTALHFRLLRQHGFTISKEVFEKFRNEDGKFKDSLKEDILGLLSLYDASYLGMHGEHILEEAKDFSTEQLKSLLGRSQGDIVTYQVKQALDVPLHWRMQRIENRNYINIYQKEDTNNLALLELAKLDYNLVQSVYQIELKELARWWIALGFREKLHFSRDRLMENYLWSMGMIFEPHFSKCRIYLTKFICILSSIDDMYDIYGSLDELELFTSALKRWDPMALEELPDYMKICYLAILNFASELVYDVLKEEGLYTLPFIRDEWVKLCQAYLVEARWFNSGYTPTFDEYLENAWISVGGHEAIVHACALLGHTSTEDFQNFLKHGFELIYWSSLLVRLNDDLGTSQAEIKRGDVVKSIQCYMIEKGVSEKEAKDHVKGLISHAWKVLNEESVKCSLSRSFVNVCLNMTRTAQCIFQYGDGIGTSIGVTKDRLEFLIVKPIL.

Mg(2+) contacts are provided by aspartate 339, aspartate 343, and glutamate 491. The DDXXD motif signature appears at 339–343 (DDMYD).

This sequence belongs to the terpene synthase family. Mg(2+) is required as a cofactor.

Its function is as follows. Probable sesquiterpene synthase. In Ricinus communis (Castor bean), this protein is Probable terpene synthase 9 (TPS9).